The chain runs to 902 residues: MVPGLQVLLFLTLHLLQNTESSMVHLNSNGYEGVVIAINPSVPEDERLIPSIKEMVTQASTYLFEASQGRVYFRNISILVPMTWKSKPEYLMPKRESYDKADVIVADPHLQHGDDPYTLQYGQCGDRGQYIHFTPNFLLTDNLRIYGPRGRVFVHEWAHLRWGVFDEYNVDQPFYMSRKNTIEATRCSTRITGTNVVHNCERGNCVTRACRRDSKTRLYEPKCTFIPDKIQTAGASIMFMQNLNSVVEFCTEKNHNAEAPNLQNKMCNRRSTWDVIKTSADFQNAPPMRGTEAPPPPTFSLLKSRRRVVCLVLDKSGSMDKEDRLIRMNQAAELYLTQIVEKESMVGLVTFDSAAHIQNYLIKITSSSDYQKITANLPQQASGGTSICHGLQAGFQAITSSDQSTSGSEIVLLTDGEDNGIRSCFEAVSRSGAIIHTIALGPSAARELETLSDMTGGLRFYANKDLNSLIDAFSRISSTSGSVSQQALQLESKAFDVRAGAWINGTVPLDSTVGNDTFFVITWMVKKPEIILQDPKGKKYTTSDFQDDKLNIRSARLQIPGTAETGTWTYSITGTKSQLITMTVTTRARSPTMEPLLATAHMSQSTAQYPSRMIVYARVSQGFLPVLGANVTALIEAEHGHQVTLELWDNGAGADTVKNDGIYTRYFTDYHGNGRYSLKVRVQAQRNKTRLSLRQKNKSLYIPGYVENGKIVLNPPRPDVQEEAIEATVEDFNRVTSGGSFTVSGAPPDGDHARVFPPSKVTDLEAEFIGDYIHLTWTAPGKVLDNGRAHRYIIRMSQHPLDLQEDFNNATLVNASSLIPKEAGSKETFKFKPETFKIANGIQLYIAIQADNEASLTSEVSNIAQAVKLTSLEDSISALGDDISAISMTIWGLTVIFNSILN.

The signal sequence occupies residues 1 to 21; it reads MVPGLQVLLFLTLHLLQNTES. A metalloprotease domain region spans residues 45 to 199; the sequence is DERLIPSIKE…RITGTNVVHN (155 aa). A glycan (N-linked (GlcNAc...) asparagine) is linked at asparagine 75. Residue histidine 155 participates in Zn(2+) binding. Residue glutamate 156 is part of the active site. Zn(2+) contacts are provided by histidine 159 and aspartate 166. The VWFA domain maps to 308 to 476; that stretch reads VVCLVLDKSG…NSLIDAFSRI (169 aa). Residues asparagine 504, asparagine 515, asparagine 630, asparagine 687, asparagine 697, asparagine 809, and asparagine 814 are each glycosylated (N-linked (GlcNAc...) asparagine).

Belongs to the CLCR family. In terms of assembly, part of a complex composed of complement component C3, CLCA1/CLCA3, A2ML1/OH and ALB/serum albumin. In terms of processing, glycosylated. Post-translationally, the 130-kDa product is autoproteolytically processed by the metalloprotease domain and yields two subunits, a 90-kDa protein and a group of 32- to 38-kDa proteins. The cleavage is necessary for calcium-activated chloride channel (CaCC) activation activity. As to expression, highly expressed in skin and spleen, and at lower levels in kidney and liver. Also detected in lung and brain. Not detected in lung or brain. In lung, localizes to respiratory epithelia of the bronchi and trachea and the submucosal glands.

Its subcellular location is the cell membrane. Functionally, plays a role in modulating chloride current across the plasma membrane in a calcium-dependent manner. The sequence is that of Calcium-activated chloride channel regulator 3A-1 from Mus musculus (Mouse).